Reading from the N-terminus, the 400-residue chain is tRNA(Met) cytidine acetate ligase (400 aa).

ATP is bound by residues 7–20, G101, N159, and R184; that span reads IVEY…HLYH.

This sequence belongs to the TmcAL family.

It localises to the cytoplasm. It carries out the reaction cytidine(34) in elongator tRNA(Met) + acetate + ATP = N(4)-acetylcytidine(34) in elongator tRNA(Met) + AMP + diphosphate. Functionally, catalyzes the formation of N(4)-acetylcytidine (ac(4)C) at the wobble position of elongator tRNA(Met), using acetate and ATP as substrates. First activates an acetate ion to form acetyladenylate (Ac-AMP) and then transfers the acetyl group to tRNA to form ac(4)C34. In Caldicellulosiruptor saccharolyticus (strain ATCC 43494 / DSM 8903 / Tp8T 6331), this protein is tRNA(Met) cytidine acetate ligase.